The primary structure comprises 332 residues: Ribose-phosphate pyrophosphokinase (332 aa).

ATP is bound at residue 57-59 (DGE). Residues histidine 150 and aspartate 189 each contribute to the Mg(2+) site. Lysine 213 is an active-site residue. D-ribose 5-phosphate is bound by residues arginine 215, aspartate 239, and 243 to 247 (DTAGT).

This sequence belongs to the ribose-phosphate pyrophosphokinase family. Class I subfamily. As to quaternary structure, homohexamer. It depends on Mg(2+) as a cofactor.

It is found in the cytoplasm. The catalysed reaction is D-ribose 5-phosphate + ATP = 5-phospho-alpha-D-ribose 1-diphosphate + AMP + H(+). The protein operates within metabolic intermediate biosynthesis; 5-phospho-alpha-D-ribose 1-diphosphate biosynthesis; 5-phospho-alpha-D-ribose 1-diphosphate from D-ribose 5-phosphate (route I): step 1/1. Its function is as follows. Involved in the biosynthesis of the central metabolite phospho-alpha-D-ribosyl-1-pyrophosphate (PRPP) via the transfer of pyrophosphoryl group from ATP to 1-hydroxyl of ribose-5-phosphate (Rib-5-P). This Gloeobacter violaceus (strain ATCC 29082 / PCC 7421) protein is Ribose-phosphate pyrophosphokinase.